A 382-amino-acid polypeptide reads, in one-letter code: Nuclear hormone receptor family member nhr-106 (382 aa).

The segment at residues 2–78 (QTTCEICEVP…MGMMPEKVKV (77 aa)) is a DNA-binding region (nuclear receptor). NR C4-type zinc fingers lie at residues 5-25 (CEICEVPAHGIHFGAITCRGC) and 42-61 (CKYSSNCTNFTGKFPQCKSC). Residues 110–380 (DVSNLITRGL…FSNPEMFIDS (271 aa)) enclose the NR LBD domain.

The protein belongs to the nuclear hormone receptor family.

The protein localises to the nucleus. Orphan nuclear receptor. The chain is Nuclear hormone receptor family member nhr-106 (nhr-106) from Caenorhabditis elegans.